The following is a 180-amino-acid chain: Cell wall / vacuolar inhibitor of fructosidase 2 (180 aa).

The signal sequence occupies residues 1–23; sequence MASSLIFLLLVTLTFSASTLISA. N-linked (GlcNAc...) asparagine glycosylation is present at asparagine 26. Cysteine 35 and cysteine 44 are oxidised to a cystine. 2 N-linked (GlcNAc...) asparagine glycosylation sites follow: asparagine 73 and asparagine 84. Cysteines 101 and 141 form a disulfide.

The protein belongs to the PMEI family. In terms of tissue distribution, mostly expressed at low levels in seedlings, stems, leaves and flowers (in all organs), and, to a lower extent, in roots and siliques.

It is found in the vacuole. Inhibits fructosidases from both cell wall (cell wall invertase CWI) and vacuoles (vacuolar invertase VI). This is Cell wall / vacuolar inhibitor of fructosidase 2 (C/VIF2) from Arabidopsis thaliana (Mouse-ear cress).